The chain runs to 440 residues: Exodeoxyribonuclease 7 large subunit (440 aa).

The protein belongs to the XseA family. Heterooligomer composed of large and small subunits.

It localises to the cytoplasm. The catalysed reaction is Exonucleolytic cleavage in either 5'- to 3'- or 3'- to 5'-direction to yield nucleoside 5'-phosphates.. Bidirectionally degrades single-stranded DNA into large acid-insoluble oligonucleotides, which are then degraded further into small acid-soluble oligonucleotides. This Ralstonia nicotianae (strain ATCC BAA-1114 / GMI1000) (Ralstonia solanacearum) protein is Exodeoxyribonuclease 7 large subunit.